The chain runs to 1198 residues: Spindle-defective protein 5 (1198 aa).

The span at 1 to 10 (MEDNSVLNED) shows a compositional bias: polar residues. The segment at 1–45 (MEDNSVLNEDSNLEHVEGQPRRSMSQPVLNVEGDKRTSSTSATQQ) is disordered. Coiled-coil stretches lie at residues 67–381 (EENK…QLTG), 566–603 (HDVA…FEEI), 694–916 (KFTS…LSTS), 983–1035 (DELC…ENVP), and 1127–1175 (KNET…EFQD).

It is found in the cytoplasm. Its subcellular location is the cytoskeleton. It localises to the microtubule organizing center. The protein resides in the centrosome. Functionally, plays a central role in centrosome maturation and mitotic spindle assembly during the first division of the zygote. Required for the centrosomal localization of air-1 and zyg-9. Probably not required in late embryogenesis and during larval development. This Caenorhabditis elegans protein is Spindle-defective protein 5 (spd-5).